Consider the following 297-residue polypeptide: Mitochondrial substrate carrier family protein P (297 aa).

3 Solcar repeats span residues 12-98, 104-189, and 201-293; these read KPSW…IKNH, SSSF…LKRI, and ISGT…LSNF. 6 helical membrane-spanning segments follow: residues 15 to 35, 66 to 86, 107 to 127, 165 to 185, 207 to 227, and 262 to 282; these read WVSF…VAPL, GIKG…PYAA, FQIF…TYPL, IQPT…TFEF, LIAG…FDVV, and ILAL…TASI.

The protein belongs to the mitochondrial carrier (TC 2.A.29) family.

The protein localises to the mitochondrion inner membrane. In terms of biological role, mitochondrial solute carriers shuttle metabolites, nucleotides, and cofactors through the mitochondrial inner membrane. Required for the accumulation of coenzyme A in the mitochondrial matrix. The polypeptide is Mitochondrial substrate carrier family protein P (mcfP) (Dictyostelium discoideum (Social amoeba)).